Reading from the N-terminus, the 338-residue chain is Holliday junction branch migration complex subunit RuvB (338 aa).

Residues 1–184 (MTEEERLLSA…FGIISHMEYY (184 aa)) are large ATPase domain (RuvB-L). ATP is bound by residues Leu23, Arg24, Gly65, Lys68, Thr69, Thr70, 131 to 133 (EDF), Arg174, Tyr184, and Arg221. Thr69 serves as a coordination point for Mg(2+). A small ATPAse domain (RuvB-S) region spans residues 185-255 (QEQDLKEIVL…IADKALTLLQ (71 aa)). Residues 258–338 (HQGLDYVDQK…GYDYLEGRKN (81 aa)) are head domain (RuvB-H). Residues Arg313 and Arg318 each coordinate DNA.

It belongs to the RuvB family. Homohexamer. Forms an RuvA(8)-RuvB(12)-Holliday junction (HJ) complex. HJ DNA is sandwiched between 2 RuvA tetramers; dsDNA enters through RuvA and exits via RuvB. An RuvB hexamer assembles on each DNA strand where it exits the tetramer. Each RuvB hexamer is contacted by two RuvA subunits (via domain III) on 2 adjacent RuvB subunits; this complex drives branch migration. In the full resolvosome a probable DNA-RuvA(4)-RuvB(12)-RuvC(2) complex forms which resolves the HJ.

It localises to the cytoplasm. It carries out the reaction ATP + H2O = ADP + phosphate + H(+). Its function is as follows. The RuvA-RuvB-RuvC complex processes Holliday junction (HJ) DNA during genetic recombination and DNA repair, while the RuvA-RuvB complex plays an important role in the rescue of blocked DNA replication forks via replication fork reversal (RFR). RuvA specifically binds to HJ cruciform DNA, conferring on it an open structure. The RuvB hexamer acts as an ATP-dependent pump, pulling dsDNA into and through the RuvAB complex. RuvB forms 2 homohexamers on either side of HJ DNA bound by 1 or 2 RuvA tetramers; 4 subunits per hexamer contact DNA at a time. Coordinated motions by a converter formed by DNA-disengaged RuvB subunits stimulates ATP hydrolysis and nucleotide exchange. Immobilization of the converter enables RuvB to convert the ATP-contained energy into a lever motion, pulling 2 nucleotides of DNA out of the RuvA tetramer per ATP hydrolyzed, thus driving DNA branch migration. The RuvB motors rotate together with the DNA substrate, which together with the progressing nucleotide cycle form the mechanistic basis for DNA recombination by continuous HJ branch migration. Branch migration allows RuvC to scan DNA until it finds its consensus sequence, where it cleaves and resolves cruciform DNA. The polypeptide is Holliday junction branch migration complex subunit RuvB (Enterococcus faecalis (strain ATCC 700802 / V583)).